The sequence spans 155 residues: Endoribonuclease YbeY (155 aa).

The Zn(2+) site is built by histidine 114, histidine 118, and histidine 124.

It belongs to the endoribonuclease YbeY family. Zn(2+) serves as cofactor.

It is found in the cytoplasm. Its function is as follows. Single strand-specific metallo-endoribonuclease involved in late-stage 70S ribosome quality control and in maturation of the 3' terminus of the 16S rRNA. The sequence is that of Endoribonuclease YbeY from Shigella dysenteriae serotype 1 (strain Sd197).